The sequence spans 1382 residues: Histone-lysine N-methyltransferase SUVR5 (1382 aa).

Disordered stretches follow at residues T43–K62 and G354–E373. 3 consecutive C2H2-type zinc fingers follow at residues F735–H758, L769–H792, and F838–H861. The interval R915–P935 is disordered. The segment covering G919 to N928 has biased composition (polar residues). One can recognise a Pre-SET domain in the interval L1145 to G1221. C1147, C1149, C1154, C1159, C1182, C1203, C1207, C1209, and C1213 together coordinate Zn(2+). An SET domain is found at A1224–G1356. Residues K1234–W1236, Y1277, and N1313–H1314 each bind S-adenosyl-L-methionine. A Zn(2+)-binding site is contributed by C1316. Position 1355 (Y1355) interacts with S-adenosyl-L-methionine. One can recognise a Post-SET domain in the interval N1366–S1382. Zn(2+) contacts are provided by C1370, C1372, and C1377.

This sequence belongs to the class V-like SAM-binding methyltransferase superfamily. Component of a regulatory complex with LDL1/SWP1. Interacts with LDL1/SWP1.

Its subcellular location is the nucleus. The protein localises to the chromosome. The enzyme catalyses L-lysyl-[histone] + S-adenosyl-L-methionine = N(6)-methyl-L-lysyl-[histone] + S-adenosyl-L-homocysteine + H(+). In terms of biological role, histone methyltransferase that functions together with its binding partner LDL1/SWP1 as one of the regulators of flower timing in Arabidopsis. Mediates H3K9me2 deposition and regulates gene expression in a DNA methylation-independent manner. Binds DNA through its zinc fingers and represses the expression of a subset of stimulus response genes. May represent a novel mechanism for plants to regulate their chromatin and transcriptional state, which may allow for the adaptability and modulation necessary to rapidly respond to environment or developmental cues. The protein is Histone-lysine N-methyltransferase SUVR5 of Arabidopsis thaliana (Mouse-ear cress).